The primary structure comprises 370 residues: Cyanuric acid amidohydrolase (370 aa).

Residues 1-106 (MRTTSVGVFK…TVFTRREVER (106 aa)) are RU A. Residues arginine 54 and 85 to 86 (SG) each bind substrate. Residues 115–251 (RLSIGMAHTR…NVVIVLGNSA (137 aa)) form an RU B region. Lysine 165 is an active-site residue. Substrate-binding positions include arginine 197 and 234–235 (SA). Residue serine 234 is the Nucleophile of the active site. An RU C region spans residues 257 to 370 (FEIGHAVMND…PVAVIARLSD (114 aa)). Residue glutamate 302 coordinates Mg(2+). Substrate is bound by residues arginine 329 and 348–349 (SG). Positions 351, 354, 355, 356, and 359 each coordinate Mg(2+).

The protein belongs to the cyclic amide hydrolase (CyAH) family. Homotetramer.

It carries out the reaction cyanurate + H2O = 1-carboxybiuret + H(+). It participates in xenobiotic degradation; atrazine degradation; biuret from cyanurate: step 1/1. Its activity is regulated as follows. Inhibited by barbituric acid. Its function is as follows. Responsible for the hydrolysis of cyanuric acid, an intermediate formed during catabolism of s-triazine based compounds in herbicides such as atrazine and polymers such as melamine. Catalyzes the hydrolytic opening of the s-triazine ring of cyanuric acid (2,4,6-trihydroxy-s-triazine) to yield carbon dioxide and carboxybiuret, which spontaneously decarboxylates to biuret. The polypeptide is Cyanuric acid amidohydrolase (Bradyrhizobium diazoefficiens (strain JCM 10833 / BCRC 13528 / IAM 13628 / NBRC 14792 / USDA 110)).